We begin with the raw amino-acid sequence, 85 residues long: Large ribosomal subunit protein bL27 (85 aa).

The protein belongs to the bacterial ribosomal protein bL27 family.

This is Large ribosomal subunit protein bL27 from Xylella fastidiosa (strain Temecula1 / ATCC 700964).